The following is a 236-amino-acid chain: 7-cyano-7-deazaguanine synthase (236 aa).

An ATP-binding site is contributed by 7–17 (CSGGLDSVSLA). Zn(2+) contacts are provided by C185, C193, C196, and C199.

The protein belongs to the QueC family. Zn(2+) serves as cofactor.

It carries out the reaction 7-carboxy-7-deazaguanine + NH4(+) + ATP = 7-cyano-7-deazaguanine + ADP + phosphate + H2O + H(+). Its pathway is purine metabolism; 7-cyano-7-deazaguanine biosynthesis. In terms of biological role, catalyzes the ATP-dependent conversion of 7-carboxy-7-deazaguanine (CDG) to 7-cyano-7-deazaguanine (preQ(0)). The chain is 7-cyano-7-deazaguanine synthase from Sinorhizobium fredii (strain NBRC 101917 / NGR234).